The sequence spans 513 residues: uncharacterized protein (513 aa).

A disordered region spans residues 1–48 (MGSSEEQSVPGDDFYEESGDLNTGLSLVLRPAKSNEGESSLSSPKGSK). Residues 37–48 (GESSLSSPKGSK) show a composition bias toward polar residues. A phosphoserine mark is found at serine 43, serine 84, and serine 123. 4 disordered regions span residues 210–229 (DGNHGNQAKNSGPAETGDLA), 236–287 (TRDS…GSKS), 390–414 (AKEDTDSTRDPSSQVQFPTHRAEPP), and 453–481 (SVLSGDQEEPVGLPAPDSEILQLPGTQGC).

This is an uncharacterized protein from Mus musculus (Mouse).